The chain runs to 436 residues: p-aminobenzoyl-glutamate hydrolase subunit A (436 aa).

Belongs to the peptidase M20 family. As to quaternary structure, forms a heterodimer with AbgB. Mn(2+) serves as cofactor.

Its function is as follows. Component of the p-aminobenzoyl-glutamate hydrolase multicomponent enzyme system which catalyzes the cleavage of p-aminobenzoyl-glutamate (PABA-GLU) to form p-aminobenzoate (PABA) and glutamate. AbgAB does not degrade dipeptides and the physiological role of abgABT should be clarified. The chain is p-aminobenzoyl-glutamate hydrolase subunit A (abgA) from Escherichia coli (strain K12).